The chain runs to 103 residues: Small ribosomal subunit protein bS18c (103 aa).

It belongs to the bacterial ribosomal protein bS18 family. As to quaternary structure, part of the 30S ribosomal subunit.

The protein localises to the plastid. It is found in the chloroplast. In Chlorella vulgaris (Green alga), this protein is Small ribosomal subunit protein bS18c (rps18).